We begin with the raw amino-acid sequence, 360 residues long: Threonine synthase (360 aa).

K69 carries the post-translational modification N6-(pyridoxal phosphate)lysine. Residues N95, 196–200, and T326 each bind pyridoxal 5'-phosphate; that span reads GNAGN.

This sequence belongs to the threonine synthase family. In terms of assembly, homodimer. Pyridoxal 5'-phosphate is required as a cofactor.

The catalysed reaction is O-phospho-L-homoserine + H2O = L-threonine + phosphate. The protein operates within amino-acid biosynthesis; L-threonine biosynthesis; L-threonine from L-aspartate: step 5/5. In terms of biological role, catalyzes the gamma-elimination of phosphate from L-phosphohomoserine and the beta-addition of water to produce L-threonine. In Mycobacterium leprae (strain TN), this protein is Threonine synthase (thrC).